A 460-amino-acid polypeptide reads, in one-letter code: MEKKLGLSALTALVLSSMLGAGVFSLPQNMAAVASPAALLIGWGITGAGILLLAFAMLILTRIRPELDGGIFTYAREGFGELIGFCSAWGYWLCAVIANVSYLVIVFSALSFFTDTPELRLFGDGNTWQSIVGASALLWIVHFLILRGVQTAASINLVATLAKLLPLGLFVVLAMMMFKLDTFKLDFTGLALGVPVWEQVKNTMLITLWVFIGVEGAVVVSARARNKRDVGKATLLAVLSALGVYLLVTLLSLGVVARPELAEIRNPSMAGLMVEMMGPWGEIIIAAGLIVSVCGAYLSWTIMAAEVPFLAATHKAFPRIFARQNAQAAPSASLWLTNICVQICLVLIWLTGSDYNTLLTIASEMILVPYFLVGAFLLKIATRPLHKAVGVGACIYGLWLLYASGPMHLLLSVVLYAPGLLVFLYARKTHTHDNVLNRQEMVLIGMLLIASVPATWMLVG.

Topologically, residues 1–4 (MEKK) are cytoplasmic. A helical membrane pass occupies residues 5-25 (LGLSALTALVLSSMLGAGVFS). The Periplasmic portion of the chain corresponds to 26 to 38 (LPQNMAAVASPAA). The helical transmembrane segment at 39–59 (LLIGWGITGAGILLLAFAMLI) threads the bilayer. Topologically, residues 60 to 92 (LTRIRPELDGGIFTYAREGFGELIGFCSAWGYW) are cytoplasmic. Residues 93 to 113 (LCAVIANVSYLVIVFSALSFF) form a helical membrane-spanning segment. Topologically, residues 114 to 125 (TDTPELRLFGDG) are periplasmic. A helical transmembrane segment spans residues 126 to 146 (NTWQSIVGASALLWIVHFLIL). Over 147 to 157 (RGVQTAASINL) the chain is Cytoplasmic. Residues 158–178 (VATLAKLLPLGLFVVLAMMMF) form a helical membrane-spanning segment. Residues 179-201 (KLDTFKLDFTGLALGVPVWEQVK) lie on the Periplasmic side of the membrane. A helical transmembrane segment spans residues 202–222 (NTMLITLWVFIGVEGAVVVSA). Residues 223 to 235 (RARNKRDVGKATL) are Cytoplasmic-facing. A helical membrane pass occupies residues 236–256 (LAVLSALGVYLLVTLLSLGVV). Residues 257–282 (ARPELAEIRNPSMAGLMVEMMGPWGE) are Periplasmic-facing. The chain crosses the membrane as a helical span at residues 283–303 (IIIAAGLIVSVCGAYLSWTIM). At 304 to 331 (AAEVPFLAATHKAFPRIFARQNAQAAPS) the chain is on the cytoplasmic side. The helical transmembrane segment at 332-352 (ASLWLTNICVQICLVLIWLTG) threads the bilayer. At 353-357 (SDYNT) the chain is on the periplasmic side. A helical membrane pass occupies residues 358–378 (LLTIASEMILVPYFLVGAFLL). The Cytoplasmic portion of the chain corresponds to 379 to 384 (KIATRP). 2 helical membrane-spanning segments follow: residues 385–405 (LHKAVGVGACIYGLWLLYASG) and 406–426 (PMHLLLSVVLYAPGLLVFLYA). Residues 427–439 (RKTHTHDNVLNRQ) are Cytoplasmic-facing. A helical membrane pass occupies residues 440–460 (EMVLIGMLLIASVPATWMLVG).

It belongs to the amino acid-polyamine-organocation (APC) superfamily. Basic amino acid/polyamine antiporter (APA) (TC 2.A.3.2) family.

The protein localises to the cell inner membrane. It carries out the reaction L-ornithine(in) + L-arginine(out) = L-ornithine(out) + L-arginine(in). Functionally, catalyzes electroneutral exchange between arginine and ornithine to allow high-efficiency energy conversion in the arginine deiminase pathway. This Escherichia coli O6:H1 (strain CFT073 / ATCC 700928 / UPEC) protein is Putative arginine/ornithine antiporter (ydgI).